A 145-amino-acid polypeptide reads, in one-letter code: Maximins 3/H3 type 1 (145 aa).

Positions 1-18 are cleaved as a signal peptide; the sequence is MNFKYIVAVSFLIASAYA. Propeptides lie at residues 19 to 43 and 74 to 124; these read RSVQNDEQSLSQRDVLEEEESLREI and RIAE…KEKR. I144 carries the post-translational modification Isoleucine amide.

Belongs to the bombinin family. In terms of tissue distribution, expressed by the skin glands.

The protein localises to the secreted. Functionally, maximin-3 shows antibacterial activity against both Gram-positive and Gram-negative bacteria. It also shows antimicrobial activity against the fungus C.albicans, but not against A.flavus nor P.uticale. It has little hemolytic activity. It possess a significant cytotoxicity against tumor cell lines. It possess a significant anti-HIV activity. It shows high spermicidal activity. In terms of biological role, maximin-H3 shows antibacterial activity against both Gram-positive and Gram-negative bacteria. It also shows antimicrobial activity against the fungus C.albicans. Shows strong hemolytic activity. The sequence is that of Maximins 3/H3 type 1 from Bombina maxima (Giant fire-bellied toad).